Consider the following 382-residue polypeptide: Chaperone protein DnaJ 1 (382 aa).

Residues 4–68 (DYYGILGVDR…DKRRIVDMGG (65 aa)) enclose the J domain. The segment at 134–216 (GAKKDLTLDT…CAGDGRVRAR (83 aa)) adopts a CR-type zinc-finger fold. Zn(2+) contacts are provided by Cys-147, Cys-150, Cys-164, Cys-167, Cys-190, Cys-193, Cys-204, and Cys-207. CXXCXGXG motif repeat units follow at residues 147 to 154 (CTKCHGSG), 164 to 171 (CGTCNGAG), 190 to 197 (CHTCDGTG), and 204 to 211 (CTECAGDG).

It belongs to the DnaJ family. In terms of assembly, homodimer. It depends on Zn(2+) as a cofactor.

Its subcellular location is the cytoplasm. Its function is as follows. Participates actively in the response to hyperosmotic and heat shock by preventing the aggregation of stress-denatured proteins and by disaggregating proteins, also in an autonomous, DnaK-independent fashion. Unfolded proteins bind initially to DnaJ; upon interaction with the DnaJ-bound protein, DnaK hydrolyzes its bound ATP, resulting in the formation of a stable complex. GrpE releases ADP from DnaK; ATP binding to DnaK triggers the release of the substrate protein, thus completing the reaction cycle. Several rounds of ATP-dependent interactions between DnaJ, DnaK and GrpE are required for fully efficient folding. Also involved, together with DnaK and GrpE, in the DNA replication of plasmids through activation of initiation proteins. This chain is Chaperone protein DnaJ 1, found in Corynebacterium glutamicum (strain ATCC 13032 / DSM 20300 / JCM 1318 / BCRC 11384 / CCUG 27702 / LMG 3730 / NBRC 12168 / NCIMB 10025 / NRRL B-2784 / 534).